We begin with the raw amino-acid sequence, 138 residues long: Transcription antitermination protein NusB (138 aa).

The protein belongs to the NusB family.

Involved in transcription antitermination. Required for transcription of ribosomal RNA (rRNA) genes. Binds specifically to the boxA antiterminator sequence of the ribosomal RNA (rrn) operons. The chain is Transcription antitermination protein NusB from Blochmanniella floridana.